A 375-amino-acid chain; its full sequence is AT-rich binding protein (375 aa).

The C2H2-type 1 zinc-finger motif lies at 29-52 (IVCHTCQEELQTQDQFWKHIQDEH). Basic and acidic residues predominate over residues 110-119 (DDQREMDIHE). The segment at 110-142 (DDQREMDIHEAQQQQHQQQQQHQQQQQLQQQQQ) is disordered. A compositionally biased stretch (low complexity) spans 121-142 (QQQQHQQQQQHQQQQQLQQQQQ). C2H2-type zinc fingers lie at residues 308 to 332 (YICDYETCGLKFKYKSRMELHRVVH) and 338 to 361 (FNCELCSASFKQSCNLSTHRKKKH).

The protein localises to the nucleus. Its function is as follows. May be a transcription factor for genes having (A+T) stretches in their promoter and/or enhancer regions. Binds to AT rich DNA. In Drosophila pseudoobscura pseudoobscura (Fruit fly), this protein is AT-rich binding protein.